A 597-amino-acid chain; its full sequence is MSNTTNPLPPETEQLLAKLNPIQLAWLSGYAWAKAQGEDAGTNVTNKNAASTLVTEDKPLNVTVLSASQTGNANGVANQLAERLKAEGVNVTRKALKEYKAKTIGDEQFVLLVTSTQGEGEAPEEGVPLYKLLHGKKAPNLANLEFAVLGLGDTSYPNFCQAGKDFDKRFEELGAKRLLARADADLDFKSTADKWIQDVVEAVKAKSAVSASVVASVVSASSAQSAVNYSKENPYTAKLITNQKITARDSAKDVRHFEFDLSGSGLQYKAGDALGVWAENDPDLINEVLGLLKIQPDESVQLNGKSLDIHGALLSRLELTQNTPAFVKGYAQLANNKKLTALVSSDKKLADYVNDTPIVDVLHDFPAKISAQQFADLLRPLTPRLYSISSSPEEVGEEVHLSVGVVRFEHEGRARTGVASGFLADRVEEDGEVKIFVEPNDNFRLPQDKSKPIIMIGSGTGIAPFRAFLQQRQAEEAEGKNWLIFGNQHFATDFLYQAEWQQFVKDGYLHKYDFAWSRDQAEKIYVQDKIREKSTALWQWLQEGAHVYVCGDASKMAKDVENALLEVIAREGKLTPEDAEEYLNDLREDKRYQRDVY.

One can recognise a Flavodoxin-like domain in the interval 62–200 (VTVLSASQTG…TADKWIQDVV (139 aa)). Residues 68–73 (SQTGNA), 115–118 (STQG), and 151–160 (LGDTSYPNFC) contribute to the FMN site. An FAD-binding FR-type domain is found at 232–446 (ENPYTAKLIT…VEPNDNFRLP (215 aa)). FAD is bound by residues Thr320, Asn354, 384–387 (RLYS), 402–404 (SVG), and 417–420 (GVAS). Residues 517–518 (SR), 523–527 (KIYVQ), and Asp559 each bind NADP(+). An FAD-binding site is contributed by Tyr597.

The protein belongs to the NADPH-dependent sulphite reductase flavoprotein subunit CysJ family. It in the N-terminal section; belongs to the flavodoxin family. In the C-terminal section; belongs to the flavoprotein pyridine nucleotide cytochrome reductase family. Alpha(8)-beta(8). The alpha component is a flavoprotein, the beta component is a hemoprotein. The cofactor is FAD. It depends on FMN as a cofactor.

The catalysed reaction is hydrogen sulfide + 3 NADP(+) + 3 H2O = sulfite + 3 NADPH + 4 H(+). Its pathway is sulfur metabolism; hydrogen sulfide biosynthesis; hydrogen sulfide from sulfite (NADPH route): step 1/1. Component of the sulfite reductase complex that catalyzes the 6-electron reduction of sulfite to sulfide. This is one of several activities required for the biosynthesis of L-cysteine from sulfate. The flavoprotein component catalyzes the electron flow from NADPH -&gt; FAD -&gt; FMN to the hemoprotein component. This Mannheimia succiniciproducens (strain KCTC 0769BP / MBEL55E) protein is Sulfite reductase [NADPH] flavoprotein alpha-component.